A 393-amino-acid chain; its full sequence is Cobalt-precorrin-5B C(1)-methyltransferase (393 aa).

The segment at 1–35 (MSDETRVGEAAEQAATPEKIRKGSARRERGNRTGF) is disordered. Positions 18–31 (EKIRKGSARRERGN) are enriched in basic and acidic residues.

It belongs to the CbiD family.

It carries out the reaction Co-precorrin-5B + S-adenosyl-L-methionine = Co-precorrin-6A + S-adenosyl-L-homocysteine. It functions in the pathway cofactor biosynthesis; adenosylcobalamin biosynthesis; cob(II)yrinate a,c-diamide from sirohydrochlorin (anaerobic route): step 6/10. Functionally, catalyzes the methylation of C-1 in cobalt-precorrin-5B to form cobalt-precorrin-6A. In Dechloromonas aromatica (strain RCB), this protein is Cobalt-precorrin-5B C(1)-methyltransferase.